The following is a 168-amino-acid chain: Phosphopantetheine adenylyltransferase (168 aa).

T13 contributes to the substrate binding site. ATP-binding positions include 13–14 (TF) and H21. Residues K45, L78, and R92 each coordinate substrate. ATP-binding positions include 93–95 (GLR), E103, and 128–134 (TQFISSS).

This sequence belongs to the bacterial CoaD family. In terms of assembly, homohexamer. Requires Mg(2+) as cofactor.

Its subcellular location is the cytoplasm. The catalysed reaction is (R)-4'-phosphopantetheine + ATP + H(+) = 3'-dephospho-CoA + diphosphate. It participates in cofactor biosynthesis; coenzyme A biosynthesis; CoA from (R)-pantothenate: step 4/5. Reversibly transfers an adenylyl group from ATP to 4'-phosphopantetheine, yielding dephospho-CoA (dPCoA) and pyrophosphate. In Wolbachia pipientis wMel, this protein is Phosphopantetheine adenylyltransferase.